The chain runs to 436 residues: GTPase Der (436 aa).

EngA-type G domains follow at residues 4–167 and 176–351; these read PIVA…KEEE and IRLS…ENHK. Residues 10-17, 57-61, 119-122, 182-189, 229-233, and 294-297 contribute to the GTP site; these read GRPNVGKS, DTGGI, NKVD, DTAGM, and NKWD. The KH-like domain occupies 352–436; that stretch reads KRVQSSTLNE…PVHIIARKRN (85 aa).

The protein belongs to the TRAFAC class TrmE-Era-EngA-EngB-Septin-like GTPase superfamily. EngA (Der) GTPase family. In terms of assembly, associates with the 50S ribosomal subunit.

In terms of biological role, GTPase that plays an essential role in the late steps of ribosome biogenesis. The sequence is that of GTPase Der from Staphylococcus saprophyticus subsp. saprophyticus (strain ATCC 15305 / DSM 20229 / NCIMB 8711 / NCTC 7292 / S-41).